The following is a 792-amino-acid chain: Starch synthase 2, chloroplastic/amyloplastic (792 aa).

The transit peptide at 1-55 (MASVAESSFPLLCQIKTQRRINSSTLRHSRVSYHDLPSGSLSFRSRSFVLGHRCK) directs the protein to the chloroplast. The interval 105–295 (IKESTPDLDD…GKDEEKPPPL (191 aa)) is disordered. Residues 145 to 156 (GSVSPSTYGKSS) show a composition bias toward polar residues. Over residues 179-192 (SSASVISSSPVTSP) the composition is skewed to low complexity. Over residues 221-233 (SVMTSPEKTSDPV) the composition is skewed to polar residues. Residues 266 to 275 (KTEKYVEKTP) show a composition bias toward basic and acidic residues. An ADP-alpha-D-glucose-binding site is contributed by Lys315.

Belongs to the glycosyltransferase 1 family. Bacterial/plant glycogen synthase subfamily. As to expression, expressed in roots, leaves and flowers.

Its subcellular location is the plastid. It localises to the chloroplast. The protein resides in the amyloplast. It catalyses the reaction [(1-&gt;4)-alpha-D-glucosyl](n) + ADP-alpha-D-glucose = [(1-&gt;4)-alpha-D-glucosyl](n+1) + ADP + H(+). Its pathway is glycan biosynthesis; starch biosynthesis. Involved in the synthesis of glycan chains within amylopectin in leaves. Is required to produce chains with a degree of polymerization of 12 to 25 (DP12-DP25). The chain is Starch synthase 2, chloroplastic/amyloplastic (SS2) from Arabidopsis thaliana (Mouse-ear cress).